Reading from the N-terminus, the 306-residue chain is Mitochondrial 2-oxoglutarate/malate carrier protein (306 aa).

Solcar repeat units follow at residues 7–95, 103–194, and 203–292; these read VPNV…LLER, LSFG…AKQA, and DGIF…MNAA. Transmembrane regions (helical) follow at residues 9–38, 72–93, 108–122, 172–192, 205–226, and 268–286; these read NVVKFAFGGTAGMGATLVVQPLDLVKNRMQ, SAGLLRQATYTTTRLGTYAFLL, KAVLGMTAGGIGSFV, PTVLRAMVVNAAQLATYSQAK, IFCHFLASMISGLATTIASMPV, and FTPYYMRLGPHTVLTFIIL.

Belongs to the mitochondrial carrier (TC 2.A.29) family. In terms of assembly, interacts with ant-1.1 and ced-9. In terms of tissue distribution, ubiquitously expressed, but highly expressed in the anterior pharynx.

It is found in the mitochondrion. The protein resides in the mitochondrion inner membrane. It catalyses the reaction (S)-malate(in) + 2-oxoglutarate(out) = (S)-malate(out) + 2-oxoglutarate(in). The catalysed reaction is malonate(in) + 2-oxoglutarate(out) = malonate(out) + 2-oxoglutarate(in). It carries out the reaction succinate(in) + 2-oxoglutarate(out) = succinate(out) + 2-oxoglutarate(in). The enzyme catalyses maleate(in) + 2-oxoglutarate(out) = maleate(out) + 2-oxoglutarate(in). It catalyses the reaction oxaloacetate(in) + 2-oxoglutarate(out) = oxaloacetate(out) + 2-oxoglutarate(in). Its function is as follows. Catalyzes the transport of 2-oxoglutarate (alpha-oxoglutarate) across the inner mitochondrial membrane in an electroneutral exchange for malate. Can also exchange 2-oxoglutarate for other dicarboxylic acids such as malonate, succinate, maleate and oxaloacetate, although with lower affinity. Contributes to several metabolic processes, including the malate-aspartate shuttle, the oxoglutarate/isocitrate shuttle, in gluconeogenesis from lactate, and in nitrogen metabolism. Maintains mitochondrial fusion and fission events, and the organization and morphology of cristae. Regulator of apoptosis, insulin secretion and germline proliferation. Furthermore, plays a role in the oxidative stress response regulating endogenous levels of reactive oxygen species (ROS). Involved in the regulation of lin-35/Rb-mediated apoptosis in the germline. In Caenorhabditis elegans, this protein is Mitochondrial 2-oxoglutarate/malate carrier protein.